The primary structure comprises 316 residues: Triplex capsid protein 2 (316 aa).

The protein belongs to the herpesviridae TRX2 protein family. Interacts with TRX1 and major capisd protein/MCP.

The protein localises to the virion. It is found in the host nucleus. Its function is as follows. Structural component of the T=16 icosahedral capsid. The capsid is composed of pentamers and hexamers of major capsid protein/MCP, which are linked together by heterotrimers called triplexes. These triplexes are formed by a single molecule of triplex protein 1/TRX1 and two copies of triplex protein 2/TRX2. Additionally, TRX1 is required for efficient transport of TRX2 to the nucleus, which is the site of capsid assembly. In Homo sapiens (Human), this protein is Triplex capsid protein 2.